Reading from the N-terminus, the 275-residue chain is MTSSASSPQDLEKGVNTLENIETLPQQGSIAGVSQGFPNIQEIYSDRDFITLGSSTYRRRDLLNALDRGDGEEGNCAKYTPHQFANPVPLGLASFSLSCLVLSLINANVRGVTDGKWALSLFMFFGGAIELFAGLLCFVIGDTYAMTVFSSFGGFWICYGYGLTDTDNLVSGYTDPTMLNNVIGFFLAGWTVFTFLMLMCTLKSTWGLFLLLTFLDLTFLLLCIGTFIDNNNLKMAGGYFGILSSCCGWYSLYCSVVSPSNSYLAFRAHTMPNAP.

Residues 1-84 (MTSSASSPQD…NCAKYTPHQF (84 aa)) lie on the Extracellular side of the membrane. S4 is modified (phosphoserine). A helical transmembrane segment spans residues 85 to 105 (ANPVPLGLASFSLSCLVLSLI). Over 106-120 (NANVRGVTDGKWALS) the chain is Cytoplasmic. The helical transmembrane segment at 121 to 141 (LFMFFGGAIELFAGLLCFVIG) threads the bilayer. At 142–181 (DTYAMTVFSSFGGFWICYGYGLTDTDNLVSGYTDPTMLNN) the chain is on the extracellular side. The helical transmembrane segment at 182-202 (VIGFFLAGWTVFTFLMLMCTL) threads the bilayer. Over 203 to 207 (KSTWG) the chain is Cytoplasmic. The helical transmembrane segment at 208 to 228 (LFLLLTFLDLTFLLLCIGTFI) threads the bilayer. At 229-236 (DNNNLKMA) the chain is on the extracellular side. A helical membrane pass occupies residues 237–257 (GGYFGILSSCCGWYSLYCSVV). The Cytoplasmic portion of the chain corresponds to 258–275 (SPSNSYLAFRAHTMPNAP).

Belongs to the acetate uptake transporter (AceTr) (TC 2.A.96) family.

It is found in the cell membrane. In terms of biological role, transporter protein required for ammonia export. Induced in rho(0) cells, probably to eliminate the excess ammonia that arises because of a potential defect in ammonia assimilation in those cells. In Saccharomyces cerevisiae (strain ATCC 204508 / S288c) (Baker's yeast), this protein is Ammonia transport outward protein 3 (ATO3).